Here is a 516-residue protein sequence, read N- to C-terminus: Melianol synthase CYP71BQ17 (516 aa).

A helical transmembrane segment spans residues 14-34 (MPHLPSLPVSLSFLLFFLMLV). A heme-binding site is contributed by C454.

The protein belongs to the cytochrome P450 family. Heme is required as a cofactor. Mainly expressed in roots and, to a lesser extent, in stems and old leaves.

The protein localises to the membrane. The catalysed reaction is dihydroniloticin + 2 reduced [NADPH--hemoprotein reductase] + 2 O2 = melianol + 2 oxidized [NADPH--hemoprotein reductase] + 3 H2O + 2 H(+). It functions in the pathway secondary metabolite biosynthesis; terpenoid biosynthesis. In terms of biological role, monooxygenase involved in the biosynthesis of quassinoids triterpene natural products such as ailanthone, chaparrinone, glaucarubinone and amarolide, allelopathic degraded triterpene lactones inhibiting the growth of other plants, and possessing antimalarial, antifeedant, insecticidal, anti-inflammatory and anticancer activities. Catalyzes the conversion of dihydroniloticin to the protolimonoid melianol. This is Melianol synthase CYP71BQ17 from Ailanthus altissima (Tree-of-heaven).